The following is a 223-amino-acid chain: Urease accessory protein UreF (223 aa).

It belongs to the UreF family. In terms of assembly, ureD, UreF and UreG form a complex that acts as a GTP-hydrolysis-dependent molecular chaperone, activating the urease apoprotein by helping to assemble the nickel containing metallocenter of UreC. The UreE protein probably delivers the nickel.

The protein resides in the cytoplasm. Functionally, required for maturation of urease via the functional incorporation of the urease nickel metallocenter. The polypeptide is Urease accessory protein UreF (Rhizobium meliloti (strain 1021) (Ensifer meliloti)).